We begin with the raw amino-acid sequence, 177 residues long: 3-hydroxydecanoyl-[acyl-carrier-protein] dehydratase (177 aa).

Histidine 76 is a catalytic residue.

It belongs to the thioester dehydratase family. FabA subfamily. As to quaternary structure, homodimer.

The protein resides in the cytoplasm. The catalysed reaction is a (3R)-hydroxyacyl-[ACP] = a (2E)-enoyl-[ACP] + H2O. It catalyses the reaction (3R)-hydroxydecanoyl-[ACP] = (2E)-decenoyl-[ACP] + H2O. It carries out the reaction (2E)-decenoyl-[ACP] = (3Z)-decenoyl-[ACP]. It participates in lipid metabolism; fatty acid biosynthesis. Functionally, necessary for the introduction of cis unsaturation into fatty acids. Catalyzes the dehydration of (3R)-3-hydroxydecanoyl-ACP to E-(2)-decenoyl-ACP and then its isomerization to Z-(3)-decenoyl-ACP. Can catalyze the dehydratase reaction for beta-hydroxyacyl-ACPs with saturated chain lengths up to 16:0, being most active on intermediate chain length. This Mannheimia succiniciproducens (strain KCTC 0769BP / MBEL55E) protein is 3-hydroxydecanoyl-[acyl-carrier-protein] dehydratase.